We begin with the raw amino-acid sequence, 109 residues long: Class I hydrophobin 2 (109 aa).

The N-terminal stretch at 1–18 is a signal peptide; the sequence is MQFKLAFVSIALATLAVA. Disulfide bonds link cysteine 30-cysteine 90, cysteine 37-cysteine 84, cysteine 38-cysteine 71, and cysteine 91-cysteine 104.

Belongs to the fungal hydrophobin family. In terms of assembly, self-assembles to form functional amyloid fibrils called rodlets. Self-assembly into fibrillar rodlets occurs spontaneously at hydrophobic:hydrophilic interfaces and the rodlets further associate laterally to form amphipathic monolayers.

The protein resides in the secreted. The protein localises to the cell wall. In terms of biological role, aerial growth, conidiation, and dispersal of filamentous fungi in the environment rely upon a capability of their secreting small amphipathic proteins called hydrophobins (HPBs) with low sequence identity. Class I can self-assemble into an outermost layer of rodlet bundles on aerial cell surfaces, conferring cellular hydrophobicity that supports fungal growth, development and dispersal; whereas Class II form highly ordered films at water-air interfaces through intermolecular interactions but contribute nothing to the rodlet structure. Hyd2 is a class I hydrophobin that may allow the dikaryotic mycelia to attach to the hydrophobic surface of the substrate. Higher expression in dikaryotic mycelia than in monokaryotic mycelia indicates that dikaryons require more hyd2 hydrophobin than the monokaryons, presumably for a higher rate of hyphal growth. This is Class I hydrophobin 2 from Lentinula edodes (Shiitake mushroom).